An 876-amino-acid chain; its full sequence is Radial spoke head 10 homolog B (876 aa).

Composition is skewed to basic and acidic residues over residues 1–16 (MVKEKKKADKKGDKSA) and 57–66 (PKRDSEHTYQ). Residues 1-72 (MVKEKKKADK…HTYQSEDETQ (72 aa)) are disordered. MORN repeat units lie at residues 86 to 108 (YEGEKVRGLYEGEGFAVFQGGNT), 109 to 131 (YHGMFSEGLMHGQGTYIWADGLK), 132 to 154 (YEGDFVKNIPMNHGVYTWPDGST), 155 to 177 (YEGEVVNGMRNGFGMFKCGTQPV), 179 to 201 (YIGHWCHGKRHGKGSIYYNQEGT), 204 to 226 (YEGDWVYNIKKGWGIRCYKSGNI), 227 to 249 (YEGQWENNMRHGEGRMRWLTTNE), 251 to 273 (YTGHWEKGIQNGFGTHTWFLKRI), 284 to 306 (YIGAFVNGFRHGQGKFYYASGAM), and 307 to 329 (YEGEWVSNKKQGRGRITFKNGRV). Disordered stretches follow at residues 360 to 386 (SQRSRQARGSSVSADREPETLRKLDGS) and 841 to 876 (EPPEVPAVQPLTPSPPKEDLVSMQTSKASPGKKKKK). Basic and acidic residues predominate over residues 373 to 386 (ADREPETLRKLDGS). The stretch at 752–841 (EKYEKSKDEQ…FELDITVLKE (90 aa)) forms a coiled coil.

In terms of assembly, interacts with RSPH6A. Does not appear to be part of the axonemal radial spoke complexes 1 or 2.

The protein resides in the cytoplasm. It localises to the cytoskeleton. The protein localises to the cilium axoneme. It is found in the cell projection. Its subcellular location is the cilium. The protein resides in the flagellum. Functionally, may function as part of the axonemal radial spoke complex 3 (RS3). Radial spoke complexes are important for ciliary motility. This chain is Radial spoke head 10 homolog B (Rsph10b), found in Rattus norvegicus (Rat).